Reading from the N-terminus, the 242-residue chain is MAVLRSLLPQLGLFLCLALCFSPALSASYNDPCTVFDTISTTNLRVNITAEGSGENITYTVWVHVNSSVSVVILKAVNQDNKPVGTWVGATQECNDSSVLYRVTPSDNSDFQATWIVPNSEDITKVNLHVLMAIGNGTAAVTSVNLGEPQTSTPLRPTPEISETNQTTTMTTDKTPAMTTAKTPAMTTAKTTAKTTAKTTVKTTAMTTAKTTAKSLAVNALGSPLAGALHILLVFLISKLLF.

An N-terminal signal peptide occupies residues 1–26; that stretch reads MAVLRSLLPQLGLFLCLALCFSPALS. N-linked (GlcNAc...) asparagine glycans are attached at residues asparagine 47, asparagine 56, and asparagine 66. Residue serine 223 is the site of GPI-anchor amidated serine attachment. The propeptide at 224 to 242 is removed in mature form; that stretch reads PLAGALHILLVFLISKLLF.

In terms of processing, N-glycosylated. Post-translationally, GPI-anchored. Present at high level in the dermal sheath cells near the bulge area of the hair follicle and in the differentiated sebocytes of the normal adult skin (at protein level).

It is found in the apical cell membrane. Its function is as follows. Modulates leading keratinocyte migration and cellular adhesion to matrix proteins during a wound-healing response and promotes wound repair. May play a role during trichilemmal differentiation of the hair follicle. This is Placenta-expressed transcript 1 protein (PLET1) from Mesocricetus auratus (Golden hamster).